The sequence spans 82 residues: MVDVFFTDTAWYVGQIFFLVLSCVIFLIFVVALLATIKLCIQICGFCNIFIISPSAYVYNRGRQLYKSYSEHVIPSTLDDLI.

Topologically, residues 1-16 are virion surface; that stretch reads MVDVFFTDTAWYVGQI. Residues 17–37 form a helical membrane-spanning segment; it reads FFLVLSCVIFLIFVVALLATI. The Intravirion portion of the chain corresponds to 38–78; it reads KLCIQICGFCNIFIISPSAYVYNRGRQLYKSYSEHVIPSTL.

Belongs to the betacoronaviruses E protein family. As to quaternary structure, homopentamer. Interacts with membrane protein M in the budding compartment of the host cell, which is located between endoplasmic reticulum and the Golgi complex. Interacts with Nucleoprotein.

The protein resides in the host Golgi apparatus membrane. Plays a central role in virus morphogenesis and assembly. Acts as a viroporin and self-assembles in host membranes forming pentameric protein-lipid pores that allow ion transport. Also plays a role in the induction of apoptosis. The polypeptide is Envelope small membrane protein (Homo sapiens (Human)).